The primary structure comprises 341 residues: tRNA N6-adenosine threonylcarbamoyltransferase (341 aa).

The Fe cation site is built by histidine 111 and histidine 115. Substrate is bound by residues 134–138 (LVSGG), aspartate 167, glycine 180, and asparagine 276. Fe cation is bound at residue aspartate 304.

The protein belongs to the KAE1 / TsaD family. The cofactor is Fe(2+).

Its subcellular location is the cytoplasm. The enzyme catalyses L-threonylcarbamoyladenylate + adenosine(37) in tRNA = N(6)-L-threonylcarbamoyladenosine(37) in tRNA + AMP + H(+). Its function is as follows. Required for the formation of a threonylcarbamoyl group on adenosine at position 37 (t(6)A37) in tRNAs that read codons beginning with adenine. Is involved in the transfer of the threonylcarbamoyl moiety of threonylcarbamoyl-AMP (TC-AMP) to the N6 group of A37, together with TsaE and TsaB. TsaD likely plays a direct catalytic role in this reaction. The chain is tRNA N6-adenosine threonylcarbamoyltransferase from Pseudomonas fluorescens (strain ATCC BAA-477 / NRRL B-23932 / Pf-5).